The following is a 290-amino-acid chain: Arginine and glutamate-rich protein 1 (290 aa).

A compositionally biased stretch (polar residues) spans 1–10; the sequence is MGSRSRTPSP. Disordered stretches follow at residues 1–137, 193–216, and 249–290; these read MGSR…AKEL, ERRR…KREE, and MDEE…PGAL. A compositionally biased stretch (basic residues) spans 12–28; sequence GKRRHHKSKHKKRSKSH. 2 stretches are compositionally biased toward basic and acidic residues: residues 29–44 and 53–76; these read HDHE…DKSS and RERD…DYRH. Ser77 and Ser79 each carry phosphoserine. The segment covering 88 to 99 has biased composition (low complexity); sequence SSSSSDSQYSEQ. The stretch at 111–269 forms a coiled coil; sequence FKKLDEQNQM…QEKRVKEEQK (159 aa). Basic and acidic residues predominate over residues 124–137; sequence RLAEMERQRRAKEL. Residues 249–269 show a composition bias toward basic and acidic residues; sequence MDEERQRMRKEQEKRVKEEQK.

Belongs to the ARGLU1 family. As to quaternary structure, associates with the U1-snRNP complex; the interaction is enhanced by binding of Arglu1 to a stable intronic sequence RNA (sisRNA) produced from the Arglu1 gene by premature cleavage.

Its subcellular location is the nucleus. It is found in the nucleus speckle. In terms of biological role, post-transcriptional regulator of gene expression; modulates splicing and premature cleavage at cryptic polyadenylation sites of its own pre-mRNA through binding and regulation of the U1-snRNP complex. In Drosophila melanogaster (Fruit fly), this protein is Arginine and glutamate-rich protein 1.